The sequence spans 62 residues: 2-hydroxymuconate tautomerase (62 aa).

The active-site Proton acceptor; via imino nitrogen is the proline 2. 9–12 (LEGR) is a binding site for substrate.

This sequence belongs to the 4-oxalocrotonate tautomerase family. In terms of assembly, homohexamer.

The catalysed reaction is (2Z,4E)-2-hydroxyhexa-2,4-dienedioate = (3E)-2-oxohex-3-enedioate. In terms of biological role, catalyzes both 1,3- and 1,5-keto-enol tautomerization of the diacid 2-hydroxymuconate (2-hydroxy-2,4-hexadienedioate) to produce 2-oxo-4-hexenedioate. This reaction is highly stereoselective and produces a mixture of stereoisomers, where the (3S)-isomer of 2-oxo-4-hexenedioate predominates. Also catalyzes the tautomerization of 2-hydroxymuconate to 2-oxo-3-hexenedioate, however this reaction is slower and occurs after the tautomerization of 2-hydroxymuconate to 2-oxo-4-hexenedioate. Using 2-hydroxy-2,4-pentadienoate, phenylenolpyruvate, (p-hydroxyphenyl)-enolpyruvate and 2-hydroxy-2,4-heptadiene-1,7-dioate, YwhB is a highly efficient 1,3-keto-enol tautomerase, but clearly not a 1,5-keto-enol tautomerase. Tautomerization of the two monoacids 2-hydroxy-2,4-pentadienoate and phenylenolpyruvate produces a mixture of stereoisomers, where the (3R)-isomers predominate. This Bacillus subtilis (strain 168) protein is 2-hydroxymuconate tautomerase (ywhB).